The following is a 297-amino-acid chain: tRNA pseudouridine synthase A (297 aa).

The Nucleophile role is filled by Asp-72. Tyr-144 contributes to the substrate binding site.

The protein belongs to the tRNA pseudouridine synthase TruA family. As to quaternary structure, homodimer.

The enzyme catalyses uridine(38/39/40) in tRNA = pseudouridine(38/39/40) in tRNA. Formation of pseudouridine at positions 38, 39 and 40 in the anticodon stem and loop of transfer RNAs. The protein is tRNA pseudouridine synthase A of Mycobacterium bovis (strain ATCC BAA-935 / AF2122/97).